The sequence spans 837 residues: Zinc fingers and homeoboxes protein 2 (837 aa).

Residues 27–77 form an interaction with EFNB1 region; that stretch reads VDRAKEKGIGTPQPDVAKDSWAAELENSSKENEVIEVKSMGESQSKKLQGG. T37 is subject to Phosphothreonine. A Glycyl lysine isopeptide (Lys-Gly) (interchain with G-Cter in SUMO2) cross-link involves residue K64. C2H2-type zinc fingers lie at residues 78 to 101 and 110 to 133; these read YECKYCPYSTQNLNEFTEHVDMQH and YVCAECNFTTKKYDSLSDHNSKFH. Residues 164 to 180 are compositionally biased toward low complexity; that stretch reads SITTSGPGTGDSDSGIS. Residues 164–204 form a disordered region; that stretch reads SITTSGPGTGDSDSGISVSKTPIMKPGKPKADAKKVPKKPE. Over residues 192 to 204 the composition is skewed to basic and acidic residues; sequence PKADAKKVPKKPE. The interval 195 to 358 is required for homodimerization; sequence DAKKVPKKPE…PAQLAPTKVT (164 aa). T207 carries the phosphothreonine modification. 4 DNA-binding regions (homeobox) span residues 263 to 324, 439 to 501, 530 to 591, and 628 to 690; these read NTTK…WSPE, TPAS…IVHI, PQKF…EQAV, and SPSP…TVKW. The interval 263–446 is required for repressor activity; that stretch reads NTTKYNSALD…PLTPASDRKK (184 aa). Positions 263-497 are required for interaction with NFYA; the sequence is NTTKYNSALD…SDHRYRCQRG (235 aa). The segment at 317 to 446 is required for nuclear localization; the sequence is HGISWSPEEV…PLTPASDRKK (130 aa). The segment at 404 to 445 is disordered; the sequence is GQKRPLVTPQAAPEPKRPHIAQVPEPPPKVANPPLTPASDRK. The segment covering 427 to 439 has biased composition (pro residues); it reads PEPPPKVANPPLT. A Glycyl lysine isopeptide (Lys-Gly) (interchain with G-Cter in SUMO2) cross-link involves residue K455. Positions 755–837 are disordered; that stretch reads PAKDCLPAKP…DCVPAEAGQA (83 aa). Residues S825 and S827 each carry the phosphoserine modification.

Belongs to the ZHX family. Homodimer (via homeobox domain). Heterodimer with ZHX1 (via homeobox domain 1). Heterodimer with ZHX3 (via homeobox domain 1). Heterodimerization with ZHX1 is not necessary for repressor activity. Interacts (via homeobox domain) with NFYA (via N-terminus). Interacts with EFNB1 intracellular domain peptide; the interaction enhances ZHX2 transcriptional repression activity. As to expression, ubiquitously expressed. Expressed in podocytes.

The protein resides in the nucleus. Acts as a transcriptional repressor. Represses the promoter activity of the CDC25C gene stimulated by NFYA. May play a role in retinal development where it regulates the composition of bipolar cell populations, by promoting differentiation of bipolar OFF-type cells. In the brain, may promote maintenance and suppress differentiation of neural progenitor cells in the developing cortex. The chain is Zinc fingers and homeoboxes protein 2 (ZHX2) from Homo sapiens (Human).